We begin with the raw amino-acid sequence, 178 residues long: ATP synthase subunit delta (178 aa).

This sequence belongs to the ATPase delta chain family. As to quaternary structure, F-type ATPases have 2 components, F(1) - the catalytic core - and F(0) - the membrane proton channel. F(1) has five subunits: alpha(3), beta(3), gamma(1), delta(1), epsilon(1). F(0) has three main subunits: a(1), b(2) and c(10-14). The alpha and beta chains form an alternating ring which encloses part of the gamma chain. F(1) is attached to F(0) by a central stalk formed by the gamma and epsilon chains, while a peripheral stalk is formed by the delta and b chains.

It localises to the cell inner membrane. Its function is as follows. F(1)F(0) ATP synthase produces ATP from ADP in the presence of a proton or sodium gradient. F-type ATPases consist of two structural domains, F(1) containing the extramembraneous catalytic core and F(0) containing the membrane proton channel, linked together by a central stalk and a peripheral stalk. During catalysis, ATP synthesis in the catalytic domain of F(1) is coupled via a rotary mechanism of the central stalk subunits to proton translocation. In terms of biological role, this protein is part of the stalk that links CF(0) to CF(1). It either transmits conformational changes from CF(0) to CF(1) or is implicated in proton conduction. This chain is ATP synthase subunit delta, found in Azotobacter vinelandii (strain DJ / ATCC BAA-1303).